The primary structure comprises 273 residues: Putative phosphoenolpyruvate synthase regulatory protein (273 aa).

ADP is bound at residue 153 to 160; the sequence is GVSRCGKT.

It belongs to the pyruvate, phosphate/water dikinase regulatory protein family. PSRP subfamily.

The catalysed reaction is [pyruvate, water dikinase] + ADP = [pyruvate, water dikinase]-phosphate + AMP + H(+). It catalyses the reaction [pyruvate, water dikinase]-phosphate + phosphate + H(+) = [pyruvate, water dikinase] + diphosphate. In terms of biological role, bifunctional serine/threonine kinase and phosphorylase involved in the regulation of the phosphoenolpyruvate synthase (PEPS) by catalyzing its phosphorylation/dephosphorylation. In Yersinia pseudotuberculosis serotype I (strain IP32953), this protein is Putative phosphoenolpyruvate synthase regulatory protein.